The primary structure comprises 286 residues: Peroxisomal membrane protein pex14 (286 aa).

Positions 61 to 69 (TSNFVSRDW) match the SH3-binding motif. Positions 122 to 214 (KILENLDEQT…REISSLRCLQ (93 aa)) form a coiled coil. The interval 218-239 (KKDDTFATTSNSSIPVLENPLD) is disordered.

Belongs to the peroxin-14 family. In terms of assembly, interacts with PEX13 (via SH3 domain); forming the PEX13-PEX14 docking complex. Interacts with PEX5 (via WxxxF/Y motifs).

It localises to the peroxisome membrane. Component of the PEX13-PEX14 docking complex, a translocon channel that specifically mediates the import of peroxisomal cargo proteins bound to PEX5 receptor. The PEX13-PEX14 docking complex forms a large import pore which can be opened to a diameter of about 9 nm. Mechanistically, PEX5 receptor along with cargo proteins associates with the PEX14 subunit of the PEX13-PEX14 docking complex in the cytosol, leading to the insertion of the receptor into the organelle membrane with the concomitant translocation of the cargo into the peroxisome matrix. The sequence is that of Peroxisomal membrane protein pex14 (pex14) from Schizosaccharomyces pombe (strain 972 / ATCC 24843) (Fission yeast).